Consider the following 590-residue polypeptide: DNA primase (590 aa).

A CHC2-type zinc finger spans residues 37 to 61 (CPFHKEKTPSFSVSPTKQFYHCFSC). In terms of domain architecture, Toprim spans 255-337 (GRILVVEGYM…DKSLHFLFLP (83 aa)). Glu-261, Asp-305, and Asp-307 together coordinate Mg(2+).

The protein belongs to the DnaG primase family. As to quaternary structure, monomer. Interacts with DnaB. Requires Zn(2+) as cofactor. The cofactor is Mg(2+).

It catalyses the reaction ssDNA + n NTP = ssDNA/pppN(pN)n-1 hybrid + (n-1) diphosphate.. Functionally, RNA polymerase that catalyzes the synthesis of short RNA molecules used as primers for DNA polymerase during DNA replication. In Neisseria meningitidis serogroup A / serotype 4A (strain DSM 15465 / Z2491), this protein is DNA primase.